The primary structure comprises 504 residues: DnaJ homolog subfamily C member 3 (504 aa).

Positions 1 to 31 (MVAPGSVTSRLGSVFPFLLVLVDLQYEGAEC) are cleaved as a signal peptide. TPR repeat units lie at residues 37 to 70 (VEKH…DPDN), 72 to 104 (IAYY…KMDF), 105 to 138 (TAAR…NPSE), 154 to 187 (MQRL…CVWD), 189 to 221 (ELRE…KNDN), 222 to 255 (TEAF…DQDH), 268 to 301 (LNKL…EPGV), 306 to 339 (IRSK…EPDN), and 340 to 373 (VNAL…NEND). A disulfide bridge connects residues cysteine 248 and cysteine 258. Serine 274 is subject to Phosphoserine. Cysteine 313 and cysteine 329 are joined by a disulfide. The interval 375–393 (QIREGLEKAQRLLKQSQRR) is flexible linker. The 69-residue stretch at 394–462 (DYYKILGVKR…EMRKKFDDGE (69 aa)) folds into the J domain. The disordered stretch occupies residues 451-481 (DPEMRKKFDDGEDPLDAESQQGGGGNPFHRS).

As to quaternary structure, interacts with EIF2AK4/GCN2; this interaction occurs under endoplasmic reticulum (ER) stress, hypothermic and amino acid starving stress conditions and inhibits EIF2AK4/GCN2 kinase activity. Interacts with EIF2AK3. Interacts with EIF2AK2. Forms a trimeric complex with DNAJB1 and HSPA8. Interacts with THAP12.

It is found in the endoplasmic reticulum. In terms of biological role, involved in the unfolded protein response (UPR) during endoplasmic reticulum (ER) stress. Acts as a negative regulator of the EIF2AK4/GCN2 kinase activity by preventing the phosphorylation of eIF-2-alpha at 'Ser-52' and hence attenuating general protein synthesis under ER stress, hypothermic and amino acid starving stress conditions. Co-chaperone of HSPA8/HSC70, it stimulates its ATPase activity. May inhibit both the autophosphorylation of EIF2AK2/PKR and the ability of EIF2AK2 to catalyze phosphorylation of the EIF2A. May inhibit EIF2AK3/PERK activity. This chain is DnaJ homolog subfamily C member 3 (DNAJC3), found in Bos taurus (Bovine).